Consider the following 549-residue polypeptide: Chaperonin GroEL (549 aa).

Residues 29–32 (TAGP), K50, 86–90 (DGTTT), G417, and D499 each bind ATP.

Belongs to the chaperonin (HSP60) family. In terms of assembly, forms a cylinder of 14 subunits composed of two heptameric rings stacked back-to-back. Interacts with the co-chaperonin GroES.

Its subcellular location is the cytoplasm. The catalysed reaction is ATP + H2O + a folded polypeptide = ADP + phosphate + an unfolded polypeptide.. In terms of biological role, together with its co-chaperonin GroES, plays an essential role in assisting protein folding. The GroEL-GroES system forms a nano-cage that allows encapsulation of the non-native substrate proteins and provides a physical environment optimized to promote and accelerate protein folding. In Anaplasma marginale (strain Florida), this protein is Chaperonin GroEL.